We begin with the raw amino-acid sequence, 404 residues long: Coenzyme F(430) synthetase (404 aa).

112-117 (GVKGKT) lines the ATP pocket.

It belongs to the MurCDEF family.

It catalyses the reaction 15,17(3)-seco-F430-17(3)-acid + ATP = coenzyme F430 + ADP + phosphate. Its function is as follows. Involved in the biosynthesis of the unique nickel-containing tetrapyrrole coenzyme F430, the prosthetic group of methyl-coenzyme M reductase (MCR), which plays a key role in methanogenesis and anaerobic methane oxidation. Catalyzes the activation the g-propionate side chain of 15,17(3)-seco-F430-17(3)-acid (seco-F430) for intramolecular C-C bond formation to yield the carbocyclic F ring of coenzyme F430. The polypeptide is Coenzyme F(430) synthetase (Methanocaldococcus jannaschii (strain ATCC 43067 / DSM 2661 / JAL-1 / JCM 10045 / NBRC 100440) (Methanococcus jannaschii)).